Here is a 571-residue protein sequence, read N- to C-terminus: Dihydroxy-acid dehydratase (571 aa).

Cys-56 contributes to the [2Fe-2S] cluster binding site. Asp-88 contributes to the Mg(2+) binding site. Cys-129 contacts [2Fe-2S] cluster. Residues Asp-130 and Lys-131 each contribute to the Mg(2+) site. Lys-131 is modified (N6-carboxylysine). Cys-201 contacts [2Fe-2S] cluster. A Mg(2+)-binding site is contributed by Glu-452. Catalysis depends on Ser-478, which acts as the Proton acceptor.

Belongs to the IlvD/Edd family. In terms of assembly, homodimer. [2Fe-2S] cluster serves as cofactor. It depends on Mg(2+) as a cofactor.

The enzyme catalyses (2R)-2,3-dihydroxy-3-methylbutanoate = 3-methyl-2-oxobutanoate + H2O. It carries out the reaction (2R,3R)-2,3-dihydroxy-3-methylpentanoate = (S)-3-methyl-2-oxopentanoate + H2O. The protein operates within amino-acid biosynthesis; L-isoleucine biosynthesis; L-isoleucine from 2-oxobutanoate: step 3/4. It functions in the pathway amino-acid biosynthesis; L-valine biosynthesis; L-valine from pyruvate: step 3/4. In terms of biological role, functions in the biosynthesis of branched-chain amino acids. Catalyzes the dehydration of (2R,3R)-2,3-dihydroxy-3-methylpentanoate (2,3-dihydroxy-3-methylvalerate) into 2-oxo-3-methylpentanoate (2-oxo-3-methylvalerate) and of (2R)-2,3-dihydroxy-3-methylbutanoate (2,3-dihydroxyisovalerate) into 2-oxo-3-methylbutanoate (2-oxoisovalerate), the penultimate precursor to L-isoleucine and L-valine, respectively. The protein is Dihydroxy-acid dehydratase of Streptococcus mutans serotype c (strain ATCC 700610 / UA159).